We begin with the raw amino-acid sequence, 226 residues long: ATP-dependent dethiobiotin synthetase BioD (226 aa).

ATP is bound at residue 12 to 17 (GIGKTV). Position 16 (Thr16) interacts with Mg(2+). The active site involves Lys37. Thr41 lines the substrate pocket. Residues Asp49, 108 to 111 (EGAG), 169 to 170 (GS), and 197 to 199 (PAG) contribute to the ATP site. The Mg(2+) site is built by Asp49 and Glu108.

The protein belongs to the dethiobiotin synthetase family. In terms of assembly, homodimer. The cofactor is Mg(2+).

Its subcellular location is the cytoplasm. It catalyses the reaction (7R,8S)-7,8-diammoniononanoate + CO2 + ATP = (4R,5S)-dethiobiotin + ADP + phosphate + 3 H(+). Its pathway is cofactor biosynthesis; biotin biosynthesis; biotin from 7,8-diaminononanoate: step 1/2. Functionally, catalyzes a mechanistically unusual reaction, the ATP-dependent insertion of CO2 between the N7 and N8 nitrogen atoms of 7,8-diaminopelargonic acid (DAPA, also called 7,8-diammoniononanoate) to form a ureido ring. The chain is ATP-dependent dethiobiotin synthetase BioD from Mycolicibacterium gilvum (strain PYR-GCK) (Mycobacterium gilvum (strain PYR-GCK)).